A 299-amino-acid chain; its full sequence is UPF0603 protein OsI_019212, chloroplastic (299 aa).

2 stretches are compositionally biased toward low complexity: residues Met1–Leu14 and Ala22–Ala36. Residues Met1–Ser41 constitute a chloroplast transit peptide. 2 disordered regions span residues Met1–Asp60 and Pro244–Glu265. Residues Cys42–Ala98 constitute a thylakoid transit peptide. Basic and acidic residues predominate over residues Lys252–Glu265. A helical membrane pass occupies residues Val276–Ile296.

It belongs to the UPF0603 family.

The protein resides in the plastid. Its subcellular location is the chloroplast thylakoid membrane. This is UPF0603 protein OsI_019212, chloroplastic from Oryza sativa subsp. indica (Rice).